The chain runs to 229 residues: DNA polymerase III subunit epsilon (229 aa).

A divalent metal cation is bound by residues aspartate 10 and glutamate 12. Residues aspartate 10, glutamate 12, aspartate 55, and histidine 60 each contribute to the substrate site. Histidine 156 acts as the Proton acceptor in catalysis. Aspartate 161 lines the a divalent metal cation pocket. Residue aspartate 161 coordinates substrate.

DNA polymerase III contains a core (composed of alpha, epsilon and theta chains) that associates with a tau subunit. This core dimerizes to form the POLIII' complex. PolIII' associates with the gamma complex (composed of gamma, delta, delta', psi and chi chains) and with the beta chain to form the complete DNA polymerase III complex. Mg(2+) serves as cofactor. The cofactor is Mn(2+).

It carries out the reaction DNA(n) + a 2'-deoxyribonucleoside 5'-triphosphate = DNA(n+1) + diphosphate. In terms of biological role, DNA polymerase III is a complex, multichain enzyme responsible for most of the replicative synthesis in bacteria. The epsilon subunit contain the editing function and is a proofreading 3'-5' exonuclease. The polypeptide is DNA polymerase III subunit epsilon (dnaQ) (Rickettsia felis (strain ATCC VR-1525 / URRWXCal2) (Rickettsia azadi)).